A 173-amino-acid polypeptide reads, in one-letter code: Cytochrome c-type biogenesis protein CcmE (173 aa).

Over 1–8 the chain is Cytoplasmic; that stretch reads MNPRRKSR. The helical; Signal-anchor for type II membrane protein transmembrane segment at 9–29 threads the bilayer; sequence FKLVIFVVLGIAIASGLMLYA. The Periplasmic segment spans residues 30–173; sequence LRQNIDLFYT…RDRQEKEGAK (144 aa). Residues H131 and Y135 each contribute to the heme site. The tract at residues 139–173 is disordered; that stretch reads ELGEKMQKVHKPMGIKAADLKGESERDRQEKEGAK. A compositionally biased stretch (basic and acidic residues) spans 156–173; it reads ADLKGESERDRQEKEGAK.

This sequence belongs to the CcmE/CycJ family.

It is found in the cell inner membrane. Its function is as follows. Heme chaperone required for the biogenesis of c-type cytochromes. Transiently binds heme delivered by CcmC and transfers the heme to apo-cytochromes in a process facilitated by CcmF and CcmH. This chain is Cytochrome c-type biogenesis protein CcmE, found in Haemophilus influenzae (strain 86-028NP).